The chain runs to 186 residues: Ribosome-recycling factor (186 aa).

Belongs to the RRF family.

It localises to the cytoplasm. Its function is as follows. Responsible for the release of ribosomes from messenger RNA at the termination of protein biosynthesis. May increase the efficiency of translation by recycling ribosomes from one round of translation to another. This Bacteroides fragilis (strain ATCC 25285 / DSM 2151 / CCUG 4856 / JCM 11019 / LMG 10263 / NCTC 9343 / Onslow / VPI 2553 / EN-2) protein is Ribosome-recycling factor.